The following is a 606-amino-acid chain: DNA mismatch repair protein MutL (606 aa).

The segment at 348 to 378 is disordered; the sequence is QPHAQRPQAPWSAETSPFRPYPPAAGFSERP.

Belongs to the DNA mismatch repair MutL/HexB family.

Functionally, this protein is involved in the repair of mismatches in DNA. It is required for dam-dependent methyl-directed DNA mismatch repair. May act as a 'molecular matchmaker', a protein that promotes the formation of a stable complex between two or more DNA-binding proteins in an ATP-dependent manner without itself being part of a final effector complex. In Rhizobium etli (strain CIAT 652), this protein is DNA mismatch repair protein MutL.